The following is a 172-amino-acid chain: Protein-export protein SecB (172 aa).

The protein belongs to the SecB family. In terms of assembly, homotetramer, a dimer of dimers. One homotetramer interacts with 1 SecA dimer.

It localises to the cytoplasm. Its function is as follows. One of the proteins required for the normal export of preproteins out of the cell cytoplasm. It is a molecular chaperone that binds to a subset of precursor proteins, maintaining them in a translocation-competent state. It also specifically binds to its receptor SecA. This chain is Protein-export protein SecB, found in Maricaulis maris (strain MCS10) (Caulobacter maris).